The sequence spans 197 residues: Phosphoheptose isomerase (197 aa).

The SIS domain maps to 34–196 (MVHCLLGGNK…DRTLFPQDEQ (163 aa)). Position 49-51 (49-51 (NGG)) interacts with substrate. 2 residues coordinate Zn(2+): His-58 and Glu-62. Substrate contacts are provided by residues Glu-62, 91 to 92 (ND), 117 to 119 (STS), Ser-122, and Gln-172. Gln-172 and His-180 together coordinate Zn(2+).

The protein belongs to the SIS family. GmhA subfamily. As to quaternary structure, homotetramer. Zn(2+) is required as a cofactor.

It is found in the cytoplasm. It catalyses the reaction 2 D-sedoheptulose 7-phosphate = D-glycero-alpha-D-manno-heptose 7-phosphate + D-glycero-beta-D-manno-heptose 7-phosphate. Its pathway is carbohydrate biosynthesis; D-glycero-D-manno-heptose 7-phosphate biosynthesis; D-glycero-alpha-D-manno-heptose 7-phosphate and D-glycero-beta-D-manno-heptose 7-phosphate from sedoheptulose 7-phosphate: step 1/1. In terms of biological role, catalyzes the isomerization of sedoheptulose 7-phosphate in D-glycero-D-manno-heptose 7-phosphate. The polypeptide is Phosphoheptose isomerase (Shewanella baltica (strain OS223)).